Consider the following 185-residue polypeptide: MANAIVEKAKERMTHSHQSLAREFGSIRAGRANASLLDRIHVEYYGVETPLNQIASITIPEARVLLVTPFDKSSIKDIERALNASDLGITPASDGSVIRLVIPALTEETRRDLAKEVKKVGENAKVAIRNIRRDAMDEAKKQEKAKEITEDELKTLEKDIQKVTDDAVKHIDEMTANKEKELLEV.

The protein belongs to the RRF family.

The protein resides in the cytoplasm. Functionally, responsible for the release of ribosomes from messenger RNA at the termination of protein biosynthesis. May increase the efficiency of translation by recycling ribosomes from one round of translation to another. This chain is Ribosome-recycling factor, found in Streptococcus sanguinis (strain SK36).